The chain runs to 444 residues: Homogentisate 1,2-dioxygenase (444 aa).

Catalysis depends on histidine 298, which acts as the Proton acceptor. Fe cation-binding residues include histidine 341 and glutamate 347. Homogentisate contacts are provided by tyrosine 356 and histidine 377. Position 377 (histidine 377) interacts with Fe cation.

This sequence belongs to the homogentisate dioxygenase family. In terms of assembly, hexamer; dimer of trimers. It depends on Fe cation as a cofactor.

It catalyses the reaction homogentisate + O2 = 4-maleylacetoacetate + H(+). It participates in amino-acid degradation; L-phenylalanine degradation; acetoacetate and fumarate from L-phenylalanine: step 4/6. In terms of biological role, involved in the catabolism of homogentisate (2,5-dihydroxyphenylacetate or 2,5-OH-PhAc), a central intermediate in the degradation of phenylalanine and tyrosine. Catalyzes the oxidative ring cleavage of the aromatic ring of homogentisate to yield maleylacetoacetate. The sequence is that of Homogentisate 1,2-dioxygenase from Burkholderia lata (strain ATCC 17760 / DSM 23089 / LMG 22485 / NCIMB 9086 / R18194 / 383).